Consider the following 380-residue polypeptide: Succinyl-diaminopimelate desuccinylase (380 aa).

Histidine 69 contributes to the Zn(2+) binding site. Aspartate 71 is an active-site residue. Zn(2+) is bound at residue aspartate 102. Glutamate 135 serves as the catalytic Proton acceptor. Residues glutamate 136, glutamate 164, and histidine 353 each coordinate Zn(2+).

This sequence belongs to the peptidase M20A family. DapE subfamily. As to quaternary structure, homodimer. Requires Zn(2+) as cofactor. It depends on Co(2+) as a cofactor.

It catalyses the reaction N-succinyl-(2S,6S)-2,6-diaminopimelate + H2O = (2S,6S)-2,6-diaminopimelate + succinate. The protein operates within amino-acid biosynthesis; L-lysine biosynthesis via DAP pathway; LL-2,6-diaminopimelate from (S)-tetrahydrodipicolinate (succinylase route): step 3/3. In terms of biological role, catalyzes the hydrolysis of N-succinyl-L,L-diaminopimelic acid (SDAP), forming succinate and LL-2,6-diaminopimelate (DAP), an intermediate involved in the bacterial biosynthesis of lysine and meso-diaminopimelic acid, an essential component of bacterial cell walls. This chain is Succinyl-diaminopimelate desuccinylase, found in Cereibacter sphaeroides (strain KD131 / KCTC 12085) (Rhodobacter sphaeroides).